Reading from the N-terminus, the 124-residue chain is Splicing factor 3B subunit 6-like protein (124 aa).

The interaction with pre-mRNA branch site stretch occupies residues 16–29; it reads EVNRVLYVRNLPFN. Positions 19–94 constitute an RRM domain; the sequence is RVLYVRNLPF…RYLIVLYYQH (76 aa).

It is found in the nucleus. Its function is as follows. May be necessary for the splicing of pre-mRNA. The chain is Splicing factor 3B subunit 6-like protein from Arabidopsis thaliana (Mouse-ear cress).